A 267-amino-acid polypeptide reads, in one-letter code: Thiamine thiazole synthase (267 aa).

NAD(+) is bound by residues S47, 66-67, G74, V138, and 164-166; these read ER and HID. Residues D166 and H181 each coordinate Fe cation. 2 residues coordinate NAD(+): S184 and M230. R240 contacts glycine.

It belongs to the THI4 family. Homooctamer; tetramer of dimers. Requires Fe(2+) as cofactor.

It carries out the reaction hydrogen sulfide + glycine + NAD(+) = ADP-5-ethyl-4-methylthiazole-2-carboxylate + nicotinamide + 3 H2O + H(+). It functions in the pathway cofactor biosynthesis; thiamine diphosphate biosynthesis. In terms of biological role, involved in the biosynthesis of the thiazole moiety of thiamine. Catalyzes the conversion of NAD and glycine to adenosine diphosphate 5-(2-hydroxyethyl)-4-methylthiazole-2-carboxylate (ADT), an adenylated thiazole intermediate, using free sulfide as a source of sulfur. The sequence is that of Thiamine thiazole synthase from Methanocaldococcus jannaschii (strain ATCC 43067 / DSM 2661 / JAL-1 / JCM 10045 / NBRC 100440) (Methanococcus jannaschii).